The primary structure comprises 185 residues: Ribose 1,5-bisphosphate phosphokinase PhnN (185 aa).

10–17 (GPSGSGKD) contributes to the ATP binding site.

The protein belongs to the ribose 1,5-bisphosphokinase family.

It carries out the reaction alpha-D-ribose 1,5-bisphosphate + ATP = 5-phospho-alpha-D-ribose 1-diphosphate + ADP. Its pathway is metabolic intermediate biosynthesis; 5-phospho-alpha-D-ribose 1-diphosphate biosynthesis; 5-phospho-alpha-D-ribose 1-diphosphate from D-ribose 5-phosphate (route II): step 3/3. In terms of biological role, catalyzes the phosphorylation of ribose 1,5-bisphosphate to 5-phospho-D-ribosyl alpha-1-diphosphate (PRPP). This Shigella dysenteriae serotype 1 (strain Sd197) protein is Ribose 1,5-bisphosphate phosphokinase PhnN.